A 200-amino-acid polypeptide reads, in one-letter code: Large ribosomal subunit protein uL4 (200 aa).

A disordered region spans residues 43–71; sequence RAQKTRAEVSGSGKKPWRQKGTGRARSGD.

Belongs to the universal ribosomal protein uL4 family. As to quaternary structure, part of the 50S ribosomal subunit.

One of the primary rRNA binding proteins, this protein initially binds near the 5'-end of the 23S rRNA. It is important during the early stages of 50S assembly. It makes multiple contacts with different domains of the 23S rRNA in the assembled 50S subunit and ribosome. Functionally, forms part of the polypeptide exit tunnel. This Pasteurella multocida (strain Pm70) protein is Large ribosomal subunit protein uL4.